Here is a 467-residue protein sequence, read N- to C-terminus: uncharacterized protein (467 aa).

Residues 1 to 60 (MVRVSRGCQSCVDAKLQSTPSPSPSKSPSPTESPEQCLQKRQSGEQVVLPSRPFPRTSPR) form a disordered region.

Its function is as follows. Involved in osmoadaptation. This is an uncharacterized protein from Emericella nidulans (strain FGSC A4 / ATCC 38163 / CBS 112.46 / NRRL 194 / M139) (Aspergillus nidulans).